The primary structure comprises 227 residues: 2-C-methyl-D-erythritol 4-phosphate cytidylyltransferase (227 aa).

It belongs to the IspD/TarI cytidylyltransferase family. IspD subfamily.

It catalyses the reaction 2-C-methyl-D-erythritol 4-phosphate + CTP + H(+) = 4-CDP-2-C-methyl-D-erythritol + diphosphate. Its pathway is isoprenoid biosynthesis; isopentenyl diphosphate biosynthesis via DXP pathway; isopentenyl diphosphate from 1-deoxy-D-xylulose 5-phosphate: step 2/6. Functionally, catalyzes the formation of 4-diphosphocytidyl-2-C-methyl-D-erythritol from CTP and 2-C-methyl-D-erythritol 4-phosphate (MEP). This chain is 2-C-methyl-D-erythritol 4-phosphate cytidylyltransferase, found in Bordetella bronchiseptica (strain ATCC BAA-588 / NCTC 13252 / RB50) (Alcaligenes bronchisepticus).